Reading from the N-terminus, the 312-residue chain is Porphobilinogen deaminase (312 aa).

Cys-243 is subject to S-(dipyrrolylmethanemethyl)cysteine.

This sequence belongs to the HMBS family. Monomer. Dipyrromethane serves as cofactor.

The enzyme catalyses 4 porphobilinogen + H2O = hydroxymethylbilane + 4 NH4(+). It participates in porphyrin-containing compound metabolism; protoporphyrin-IX biosynthesis; coproporphyrinogen-III from 5-aminolevulinate: step 2/4. Functionally, tetrapolymerization of the monopyrrole PBG into the hydroxymethylbilane pre-uroporphyrinogen in several discrete steps. This is Porphobilinogen deaminase from Vibrio parahaemolyticus serotype O3:K6 (strain RIMD 2210633).